We begin with the raw amino-acid sequence, 156 residues long: Small ribosomal subunit protein uS7 (156 aa).

This sequence belongs to the universal ribosomal protein uS7 family. In terms of assembly, part of the 30S ribosomal subunit. Contacts proteins S9 and S11.

In terms of biological role, one of the primary rRNA binding proteins, it binds directly to 16S rRNA where it nucleates assembly of the head domain of the 30S subunit. Is located at the subunit interface close to the decoding center, probably blocks exit of the E-site tRNA. In Pseudomonas entomophila (strain L48), this protein is Small ribosomal subunit protein uS7.